The following is a 339-amino-acid chain: Methionine import ATP-binding protein MetN 2 (339 aa).

Positions 2 to 241 constitute an ABC transporter domain; it reads ISFNNVSKLY…PKTKTTQNFV (240 aa). 38 to 45 provides a ligand contact to ATP; that stretch reads GFSGAGKS.

Belongs to the ABC transporter superfamily. Methionine importer (TC 3.A.1.24) family. The complex is composed of two ATP-binding proteins (MetN), two transmembrane proteins (MetI) and a solute-binding protein (MetQ).

It is found in the cell membrane. The enzyme catalyses L-methionine(out) + ATP + H2O = L-methionine(in) + ADP + phosphate + H(+). It catalyses the reaction D-methionine(out) + ATP + H2O = D-methionine(in) + ADP + phosphate + H(+). Functionally, part of the ABC transporter complex MetNIQ involved in methionine import. Responsible for energy coupling to the transport system. The chain is Methionine import ATP-binding protein MetN 2 from Bacillus cereus (strain ATCC 14579 / DSM 31 / CCUG 7414 / JCM 2152 / NBRC 15305 / NCIMB 9373 / NCTC 2599 / NRRL B-3711).